A 431-amino-acid polypeptide reads, in one-letter code: Histidinol dehydrogenase (431 aa).

Residues Tyr-130, Gln-191, and Asn-214 each coordinate NAD(+). Residues Ser-237, Gln-259, and His-262 each coordinate substrate. 2 residues coordinate Zn(2+): Gln-259 and His-262. Catalysis depends on proton acceptor residues Glu-327 and His-328. Positions 328, 361, 415, and 420 each coordinate substrate. Asp-361 is a binding site for Zn(2+). His-420 is a binding site for Zn(2+).

The protein belongs to the histidinol dehydrogenase family. The cofactor is Zn(2+).

It carries out the reaction L-histidinol + 2 NAD(+) + H2O = L-histidine + 2 NADH + 3 H(+). It participates in amino-acid biosynthesis; L-histidine biosynthesis; L-histidine from 5-phospho-alpha-D-ribose 1-diphosphate: step 9/9. Catalyzes the sequential NAD-dependent oxidations of L-histidinol to L-histidinaldehyde and then to L-histidine. The polypeptide is Histidinol dehydrogenase (Bradyrhizobium diazoefficiens (strain JCM 10833 / BCRC 13528 / IAM 13628 / NBRC 14792 / USDA 110)).